The following is a 154-amino-acid chain: Protein X (154 aa).

The segment at 68–117 is mitochondrial targeting sequence; that stretch reads PCALRFTSARRMETTVNAHRNLPKVLHKRTLGLSVMSTTDLEAYFKDCVF.

This sequence belongs to the orthohepadnavirus protein X family. As to quaternary structure, may form homodimer. May interact with host CEBPA, CFLAR, CREB1, DDB1, E4F1, HBXIP, HSPD1/HSP60, NFKBIA, POLR2E and SMAD4. Interacts with host SMC5-SMC6 complex and induces its degradation. Interacts with host TRPC4AP; leading to prevent ubiquitination of TRPC4AP. Interacts with host PLSCR1; this interaction promotes ubiquitination and degradation of HBx and impairs HBx-mediated cell proliferation. In terms of processing, a fraction may be phosphorylated in insect cells and HepG2 cells, a human hepatoblastoma cell line. Phosphorylated in vitro by host protein kinase C or mitogen-activated protein kinase. N-acetylated in insect cells.

It is found in the host cytoplasm. Its subcellular location is the host nucleus. The protein resides in the host mitochondrion. Its function is as follows. Multifunctional protein that plays a role in silencing host antiviral defenses and promoting viral transcription. Does not seem to be essential for HBV infection. May be directly involved in development of cirrhosis and liver cancer (hepatocellular carcinoma). Most of cytosolic activities involve modulation of cytosolic calcium. The effect on apoptosis is controversial depending on the cell types in which the studies have been conducted. May induce apoptosis by localizing in mitochondria and causing loss of mitochondrial membrane potential. May also modulate apoptosis by binding host CFLAR, a key regulator of the death-inducing signaling complex (DISC). Promotes viral transcription by using the host E3 ubiquitin ligase DDB1 to target the SMC5-SMC6 complex to proteasomal degradation. This host complex would otherwise bind to viral episomal DNA, and prevents its transcription. Moderately stimulates transcription of many different viral and cellular transcription elements. Promoters and enhancers stimulated by HBx contain DNA binding sites for NF-kappa-B, AP-1, AP-2, c-EBP, ATF/CREB, or the calcium-activated factor NF-AT. This Hepatitis B virus genotype B1 (isolate Japan/Yamagata-2/1998) (HBV-B) protein is Protein X.